A 306-amino-acid polypeptide reads, in one-letter code: Curved DNA-binding protein (306 aa).

The region spanning 5-69 is the J domain; the sequence is DYYAIMGVKP…QRRAEYDQMW (65 aa).

Its subcellular location is the cytoplasm. The protein localises to the nucleoid. In terms of biological role, DNA-binding protein that preferentially recognizes a curved DNA sequence. It is probably a functional analog of DnaJ; displays overlapping activities with DnaJ, but functions under different conditions, probably acting as a molecular chaperone in an adaptive response to environmental stresses other than heat shock. Lacks autonomous chaperone activity; binds native substrates and targets them for recognition by DnaK. Its activity is inhibited by the binding of CbpM. This is Curved DNA-binding protein from Escherichia coli O8 (strain IAI1).